The following is a 128-amino-acid chain: Small ribosomal subunit protein uS11 (128 aa).

It belongs to the universal ribosomal protein uS11 family. As to quaternary structure, part of the 30S ribosomal subunit. Interacts with proteins S7 and S18. Binds to IF-3.

Its function is as follows. Located on the platform of the 30S subunit, it bridges several disparate RNA helices of the 16S rRNA. Forms part of the Shine-Dalgarno cleft in the 70S ribosome. This is Small ribosomal subunit protein uS11 from Acinetobacter baylyi (strain ATCC 33305 / BD413 / ADP1).